The sequence spans 472 residues: Chromosomal replication initiator protein DnaA (472 aa).

The interval 1–73 (MSNMEQDRWS…LSCWQAELPE (73 aa)) is domain I, interacts with DnaA modulators. The segment at 73-128 (EVNRVDLTVRSPVRCATPAKEVPAPVESRRDEQRPSAERSNGATPVSANHDALGGS) is domain II. The tract at residues 90–124 (PAKEVPAPVESRRDEQRPSAERSNGATPVSANHDA) is disordered. The span at 99–109 (ESRRDEQRPSA) shows a compositional bias: basic and acidic residues. Positions 110–119 (ERSNGATPVS) are enriched in polar residues. The tract at residues 129-351 (PLDPRLTFAS…GAINRLLAHS (223 aa)) is domain III, AAA+ region. ATP contacts are provided by Gly176, Gly178, Lys179, and Thr180. The segment at 352 to 472 (KLNNQPVTLE…VESLKRQLQE (121 aa)) is domain IV, binds dsDNA.

It belongs to the DnaA family. Oligomerizes as a right-handed, spiral filament on DNA at oriC.

The protein localises to the cytoplasm. In terms of biological role, plays an essential role in the initiation and regulation of chromosomal replication. ATP-DnaA binds to the origin of replication (oriC) to initiate formation of the DNA replication initiation complex once per cell cycle. Binds the DnaA box (a 9 base pair repeat at the origin) and separates the double-stranded (ds)DNA. Forms a right-handed helical filament on oriC DNA; dsDNA binds to the exterior of the filament while single-stranded (ss)DNA is stabiized in the filament's interior. The ATP-DnaA-oriC complex binds and stabilizes one strand of the AT-rich DNA unwinding element (DUE), permitting loading of DNA polymerase. After initiation quickly degrades to an ADP-DnaA complex that is not apt for DNA replication. Binds acidic phospholipids. The polypeptide is Chromosomal replication initiator protein DnaA (Rhodopseudomonas palustris (strain ATCC BAA-98 / CGA009)).